We begin with the raw amino-acid sequence, 294 residues long: ATP phosphoribosyltransferase (294 aa).

Belongs to the ATP phosphoribosyltransferase family. Long subfamily. Mg(2+) serves as cofactor.

It is found in the cytoplasm. The enzyme catalyses 1-(5-phospho-beta-D-ribosyl)-ATP + diphosphate = 5-phospho-alpha-D-ribose 1-diphosphate + ATP. Its pathway is amino-acid biosynthesis; L-histidine biosynthesis; L-histidine from 5-phospho-alpha-D-ribose 1-diphosphate: step 1/9. Feedback inhibited by histidine. Functionally, catalyzes the condensation of ATP and 5-phosphoribose 1-diphosphate to form N'-(5'-phosphoribosyl)-ATP (PR-ATP). Has a crucial role in the pathway because the rate of histidine biosynthesis seems to be controlled primarily by regulation of HisG enzymatic activity. The polypeptide is ATP phosphoribosyltransferase (Chlorobaculum parvum (strain DSM 263 / NCIMB 8327) (Chlorobium vibrioforme subsp. thiosulfatophilum)).